A 209-amino-acid chain; its full sequence is MNKIISNKIINNNIIFRNNFNNLFFIRNFINNKNNNNNNNNNNNNNNNNNNRNKKLKYSPNHQWIKISENKDFATIGITNYVSDIVNNEFNKILKIKLPKINDKIRLNQPFLSIWTKEEENIQFKSPLSGIVSKVNNKFNNQQTTTISTKTTTTTTKIKPKLPLKSNSLFFNNDQDSWTIELKINEPFQTNHLMTEEEYAHYCENTDYK.

Positions 35–51 (NNNNNNNNNNNNNNNNN) are enriched in low complexity. Residues 35–56 (NNNNNNNNNNNNNNNNNRNKKL) form a disordered region. One can recognise a Lipoyl-binding domain in the interval 73 to 159 (FATIGITNYV…KTTTTTTKIK (87 aa)).

Belongs to the GcvH family.

The polypeptide is Glycine cleavage system H-like protein gcvH4 (gcvH4) (Dictyostelium discoideum (Social amoeba)).